The following is a 465-amino-acid chain: Indoleacetamide hydrolase (465 aa).

Positions 1–40 are disordered; sequence MVRGRHRSRDPQRRDLRGRDRRSASRTDARRQSAAERGCR. Positions 9–39 are enriched in basic and acidic residues; it reads RDPQRRDLRGRDRRSASRTDARRQSAAERGC. S149 functions as the Charge relay system in the catalytic mechanism. The Acyl-ester intermediate role is filled by S173.

Belongs to the amidase family.

It functions in the pathway plant hormone metabolism; auxin biosynthesis. Functionally, hydrolyzes indole-3-acetamide (IAM) into indole-3-acetic acid (IAA). The sequence is that of Indoleacetamide hydrolase (bam) from Bradyrhizobium japonicum.